The following is a 570-amino-acid chain: Laccase-3 (570 aa).

The N-terminal stretch at 1–25 (MESFRRFSLLSFIALLAYFAFLASA) is a signal peptide. Plastocyanin-like domains are found at residues 33-149 (VITP…PRLG) and 159-310 (RDIP…YVNA). A glycan (N-linked (GlcNAc...) asparagine) is linked at Asn-79. Positions 83, 85, 128, and 130 each coordinate Cu cation. Residues Asn-188, Asn-298, Asn-332, Asn-383, Asn-393, and Asn-433 are each glycosylated (N-linked (GlcNAc...) asparagine). The region spanning 419–554 (DFPPVPPVQF…AMVFLVENGR (136 aa)) is the Plastocyanin-like 3 domain. Residues His-471, His-474, His-476, His-533, Cys-534, His-535, and His-539 each contribute to the Cu cation site.

This sequence belongs to the multicopper oxidase family. Cu cation serves as cofactor. As to expression, mostly expressed in roots and siliques.

The protein localises to the secreted. It localises to the extracellular space. Its subcellular location is the apoplast. The enzyme catalyses 4 hydroquinone + O2 = 4 benzosemiquinone + 2 H2O. In terms of biological role, lignin degradation and detoxification of lignin-derived products. The protein is Laccase-3 (LAC3) of Arabidopsis thaliana (Mouse-ear cress).